The following is a 211-amino-acid chain: Small ribosomal subunit protein uS3 (211 aa).

One can recognise a KH type-2 domain in the interval Leu-38–Lys-106.

This sequence belongs to the universal ribosomal protein uS3 family. Part of the 30S ribosomal subunit. Forms a tight complex with proteins S10 and S14.

Binds the lower part of the 30S subunit head. Binds mRNA in the 70S ribosome, positioning it for translation. This Ehrlichia ruminantium (strain Gardel) protein is Small ribosomal subunit protein uS3.